The chain runs to 292 residues: Homoserine kinase (292 aa).

84–94 (PLARGMGSSSA) is an ATP binding site.

It belongs to the GHMP kinase family. Homoserine kinase subfamily.

Its subcellular location is the cytoplasm. The catalysed reaction is L-homoserine + ATP = O-phospho-L-homoserine + ADP + H(+). It participates in amino-acid biosynthesis; L-threonine biosynthesis; L-threonine from L-aspartate: step 4/5. Its function is as follows. Catalyzes the ATP-dependent phosphorylation of L-homoserine to L-homoserine phosphate. The polypeptide is Homoserine kinase (Thermus thermophilus (strain ATCC 27634 / DSM 579 / HB8)).